A 519-amino-acid polypeptide reads, in one-letter code: DNA damage-binding protein CMR1 (519 aa).

The interval A35–E92 is disordered. Residues P53–K62 are compositionally biased toward basic residues. Over residues K78–E92 the composition is skewed to basic and acidic residues. WD repeat units follow at residues P240–V280, N287–E327, L331–D371, E380–T420, G442–L485, and D488–M519.

This sequence belongs to the WD repeat DDB2/WDR76 family.

DNA-binding protein that binds to both single- and double-stranded DNA. Binds preferentially to UV-damaged DNA. May be involved in DNA-metabolic processes. The polypeptide is DNA damage-binding protein CMR1 (Phaeosphaeria nodorum (strain SN15 / ATCC MYA-4574 / FGSC 10173) (Glume blotch fungus)).